The sequence spans 107 residues: Large ribosomal subunit protein uL24 (107 aa).

Belongs to the universal ribosomal protein uL24 family. In terms of assembly, part of the 50S ribosomal subunit.

One of two assembly initiator proteins, it binds directly to the 5'-end of the 23S rRNA, where it nucleates assembly of the 50S subunit. In terms of biological role, one of the proteins that surrounds the polypeptide exit tunnel on the outside of the subunit. The protein is Large ribosomal subunit protein uL24 of Streptomyces griseus subsp. griseus (strain JCM 4626 / CBS 651.72 / NBRC 13350 / KCC S-0626 / ISP 5235).